The primary structure comprises 378 residues: Probable pectin lyase A (378 aa).

The signal sequence occupies residues 1–18 (MKYQGLLAIAGCIASASA). 2 disulfides stabilise this stretch: C81–C100 and C90–C224. A glycan (N-linked (GlcNAc...) asparagine) is linked at N127. Residue R254 is part of the active site. C321 and C329 are disulfide-bonded.

It belongs to the polysaccharide lyase 1 family.

The protein resides in the secreted. The enzyme catalyses Eliminative cleavage of (1-&gt;4)-alpha-D-galacturonan methyl ester to give oligosaccharides with 4-deoxy-6-O-methyl-alpha-D-galact-4-enuronosyl groups at their non-reducing ends.. Functionally, pectinolytic enzymes consist of four classes of enzymes: pectin lyase, polygalacturonase, pectin methylesterase and rhamnogalacturonase. Among pectinolytic enzymes, pectin lyase is the most important in depolymerization of pectin, since it cleaves internal glycosidic bonds of highly methylated pectins. This is Probable pectin lyase A (pelA) from Neosartorya fischeri (strain ATCC 1020 / DSM 3700 / CBS 544.65 / FGSC A1164 / JCM 1740 / NRRL 181 / WB 181) (Aspergillus fischerianus).